Reading from the N-terminus, the 569-residue chain is Peroxisomal targeting signal receptor (569 aa).

Cysteine 9 participates in a covalent cross-link: Glycyl cysteine thioester (Cys-Gly) (interchain with G-Cter in ubiquitin). The interval 10–32 (AANANPLAQFFKQSQHDTSLEQS) is amphipathic helix 1 (AH1). Lysine 21 participates in a covalent cross-link: Glycyl lysine isopeptide (Lys-Gly) (interchain with G-Cter in ubiquitin). The disordered stretch occupies residues 23–42 (SQHDTSLEQSLRNSAHDTHQ). The amphipathic helix 2 (AH2) stretch occupies residues 57 to 72 (RAHMEQFMNQSTPFNF). 2 short sequence motifs (wxxxF/Y motif) span residues 118–122 (WSSEF) and 183–187 (WEQQF). The segment at 218-234 (FDQVWDNIQETYADNML) is amphipathic helix 4 (AH4). The short motif at 243 to 247 (WEKDF) is the WxxxF/Y motif 3 element. TPR repeat units lie at residues 272–305 (LDAY…NPGH), 306–339 (VDAW…SPQN), 340–377 (LVAL…VAER), 378–415 (ARNA…ANMD), 416–449 (SEVQ…NPND), 450–483 (ALAW…NPNF), and 484–517 (VRAR…HEVE).

Belongs to the peroxisomal targeting signal receptor family. As to quaternary structure, interacts (via WxxxF/Y and LVxEF motifs) with PEX14; promoting translocation through the PEX13-PEX14 docking complex. Monoubiquitinated at Cys-9 by PEX2 during PEX5 passage through the retrotranslocation channel: monoubiquitination acts as a signal for PEX5 extraction and is required for proper export from peroxisomes and recycling. When PEX5 recycling is compromised, polyubiquitinated at Lys-21 by PEX10 during its passage through the retrotranslocation channel, leading to its degradation.

The protein resides in the cytoplasm. The protein localises to the cytosol. It localises to the peroxisome matrix. Receptor that mediates peroxisomal import of proteins containing a C-terminal PTS1-type tripeptide peroxisomal targeting signal (SKL-type). Binds to cargo proteins containing a PTS1 peroxisomal targeting signal in the cytosol, and translocates them into the peroxisome matrix by passing through the PEX13-PEX14 docking complex along with cargo proteins. PEX5 receptor is then retrotranslocated into the cytosol, leading to release of bound cargo in the peroxisome matrix, and reset for a subsequent peroxisome import cycle. The protein is Peroxisomal targeting signal receptor (PEX5) of Pichia angusta (Yeast).